The chain runs to 248 residues: UPF0651 protein YPL107W, mitochondrial (248 aa).

The transit peptide at 1–26 (MIRNQGWSLLYRIYPVRRFTRYSRVD) directs the protein to the mitochondrion. Residues 69-116 (KKIAGVQVPAKPQEPDNCCMSGCVNCVWEIYSEDLRDWKHRRKEAAEK) form the Oxidoreductase-like domain.

The protein belongs to the UPF0651 family.

It is found in the mitochondrion. This is UPF0651 protein YPL107W, mitochondrial from Saccharomyces cerevisiae (strain ATCC 204508 / S288c) (Baker's yeast).